The sequence spans 537 residues: Copine-1 (537 aa).

2 consecutive C2 domains span residues 1–114 (MAHC…TLPL) and 123–245 (GRGT…ECIH). 7 residues coordinate Ca(2+): aspartate 21, aspartate 27, aspartate 80, aspartate 82, aspartate 92, aspartate 153, and aspartate 159. Lysine 171 carries the N6-acetyllysine modification. Positions 214, 216, and 222 each coordinate Ca(2+). One can recognise a VWFA domain in the interval 285–505 (NFTVGVDFTG…ALAQTVLAEV (221 aa)).

Belongs to the copine family. Homodimer; homodimerizes via its C2 domains. Interacts with p65/RELA (via N-terminus); this interaction induces proteolytic cleavage of p65/RELA subunit and inhibition of NF-kappa-B transcriptional activity. Interacts (via VWFA domain) with ACTB, CCDC22, MYCBP2, PPP5C, RDX and UBE2O. The cofactor is Ca(2+). As to expression, expressed in liver, spleen, muscle, testis, adrenal (at protein level).

The protein localises to the nucleus. Its subcellular location is the cytoplasm. It localises to the cell membrane. Functionally, calcium-dependent phospholipid-binding protein that plays a role in calcium-mediated intracellular processes. Involved in the TNF-alpha receptor signaling pathway in a calcium-dependent manner. Exhibits calcium-dependent phospholipid binding properties. Plays a role in neuronal progenitor cell differentiation; induces neurite outgrowth via a AKT-dependent signaling cascade and calcium-independent manner. May recruit target proteins to the cell membrane in a calcium-dependent manner. May function in membrane trafficking. Involved in TNF-alpha-induced NF-kappa-B transcriptional repression by inducing endoprotease processing of the transcription factor NF-kappa-B p65/RELA subunit. Also induces endoprotease processing of NF-kappa-B p50/NFKB1, p52/NFKB2, RELB and REL. This is Copine-1 from Bos taurus (Bovine).